We begin with the raw amino-acid sequence, 375 residues long: Queuine tRNA-ribosyltransferase (375 aa).

The active-site Proton acceptor is the aspartate 89. Residues 89–93, aspartate 143, glutamine 187, and glycine 214 contribute to the substrate site; that span reads DSGGF. An RNA binding region spans residues 245–251; the sequence is GVGKPED. Aspartate 264 (nucleophile) is an active-site residue. The tract at residues 269 to 273 is RNA binding; important for wobble base 34 recognition; the sequence is TRNAR. Zn(2+) is bound by residues cysteine 302, cysteine 304, cysteine 307, and histidine 333.

This sequence belongs to the queuine tRNA-ribosyltransferase family. In terms of assembly, homodimer. Within each dimer, one monomer is responsible for RNA recognition and catalysis, while the other monomer binds to the replacement base PreQ1. Zn(2+) is required as a cofactor.

The catalysed reaction is 7-aminomethyl-7-carbaguanine + guanosine(34) in tRNA = 7-aminomethyl-7-carbaguanosine(34) in tRNA + guanine. It functions in the pathway tRNA modification; tRNA-queuosine biosynthesis. In terms of biological role, catalyzes the base-exchange of a guanine (G) residue with the queuine precursor 7-aminomethyl-7-deazaguanine (PreQ1) at position 34 (anticodon wobble position) in tRNAs with GU(N) anticodons (tRNA-Asp, -Asn, -His and -Tyr). Catalysis occurs through a double-displacement mechanism. The nucleophile active site attacks the C1' of nucleotide 34 to detach the guanine base from the RNA, forming a covalent enzyme-RNA intermediate. The proton acceptor active site deprotonates the incoming PreQ1, allowing a nucleophilic attack on the C1' of the ribose to form the product. After dissociation, two additional enzymatic reactions on the tRNA convert PreQ1 to queuine (Q), resulting in the hypermodified nucleoside queuosine (7-(((4,5-cis-dihydroxy-2-cyclopenten-1-yl)amino)methyl)-7-deazaguanosine). The chain is Queuine tRNA-ribosyltransferase from Enterobacter sp. (strain 638).